The following is a 508-amino-acid chain: tRNA-2-methylthio-N(6)-dimethylallyladenosine synthase (508 aa).

Positions 1 to 21 are disordered; sequence MNEEQRKASGQVSSSDKKSEK. One can recognise an MTTase N-terminal domain in the interval 65-183; the sequence is RKFYIRTYGC…LPELLSECYL (119 aa). [4Fe-4S] cluster is bound by residues C74, C110, C144, C220, C224, and C227. The Radical SAM core domain occupies 206–436; sequence RQGKIKGWVN…NALVNEISAK (231 aa). A TRAM domain is found at 439-502; the sequence is KEYEGQTVEV…TWSLDGEMVG (64 aa).

This sequence belongs to the methylthiotransferase family. MiaB subfamily. Monomer. [4Fe-4S] cluster serves as cofactor.

The protein resides in the cytoplasm. It carries out the reaction N(6)-dimethylallyladenosine(37) in tRNA + (sulfur carrier)-SH + AH2 + 2 S-adenosyl-L-methionine = 2-methylsulfanyl-N(6)-dimethylallyladenosine(37) in tRNA + (sulfur carrier)-H + 5'-deoxyadenosine + L-methionine + A + S-adenosyl-L-homocysteine + 2 H(+). Its function is as follows. Catalyzes the methylthiolation of N6-(dimethylallyl)adenosine (i(6)A), leading to the formation of 2-methylthio-N6-(dimethylallyl)adenosine (ms(2)i(6)A) at position 37 in tRNAs that read codons beginning with uridine. The chain is tRNA-2-methylthio-N(6)-dimethylallyladenosine synthase from Bacillus pumilus (strain SAFR-032).